Reading from the N-terminus, the 421-residue chain is Serine--tRNA ligase (421 aa).

L-serine is bound at residue 229–231; sequence TSE. ATP contacts are provided by residues 260–262 and V276; that span reads RKE. Residue E283 participates in L-serine binding. 347–350 contributes to the ATP binding site; sequence EIVS. T383 contributes to the L-serine binding site.

The protein belongs to the class-II aminoacyl-tRNA synthetase family. Type-1 seryl-tRNA synthetase subfamily. In terms of assembly, homodimer. The tRNA molecule binds across the dimer.

It is found in the cytoplasm. It carries out the reaction tRNA(Ser) + L-serine + ATP = L-seryl-tRNA(Ser) + AMP + diphosphate + H(+). The catalysed reaction is tRNA(Sec) + L-serine + ATP = L-seryl-tRNA(Sec) + AMP + diphosphate + H(+). It participates in aminoacyl-tRNA biosynthesis; selenocysteinyl-tRNA(Sec) biosynthesis; L-seryl-tRNA(Sec) from L-serine and tRNA(Sec): step 1/1. Its function is as follows. Catalyzes the attachment of serine to tRNA(Ser). Is also able to aminoacylate tRNA(Sec) with serine, to form the misacylated tRNA L-seryl-tRNA(Sec), which will be further converted into selenocysteinyl-tRNA(Sec). The sequence is that of Serine--tRNA ligase from Nitrosopumilus maritimus (strain SCM1).